We begin with the raw amino-acid sequence, 119 residues long: Large ribosomal subunit protein bL20c (119 aa).

It belongs to the bacterial ribosomal protein bL20 family.

Its subcellular location is the plastid. It localises to the chloroplast. Binds directly to 23S ribosomal RNA and is necessary for the in vitro assembly process of the 50S ribosomal subunit. It is not involved in the protein synthesizing functions of that subunit. The sequence is that of Large ribosomal subunit protein bL20c from Triticum aestivum (Wheat).